We begin with the raw amino-acid sequence, 290 residues long: Protease HtpX (290 aa).

The next 2 helical transmembrane spans lie at 6–26 (LFLVTNLAVMLVLGVVLNILF) and 36–56 (ISGLLMFCAVFGFGGSFISLL). Position 143 (His143) interacts with Zn(2+). The active site involves Glu144. His147 serves as a coordination point for Zn(2+). 2 helical membrane passes run 158–178 (LIQGVVNTFVMFFARIVAGVI) and 200–220 (ITVFVLEMAFGVLASMIVMWF). Glu225 is a binding site for Zn(2+).

It belongs to the peptidase M48B family. Zn(2+) serves as cofactor.

It localises to the cell inner membrane. This chain is Protease HtpX, found in Aeromonas salmonicida (strain A449).